The sequence spans 346 residues: Methionine import ATP-binding protein MetN (346 aa).

An ABC transporter domain is found at 2–243 (VRFEGISKTY…PKHPITQSFL (242 aa)). Position 40–47 (40–47 (GRSGAGKS)) interacts with ATP.

The protein belongs to the ABC transporter superfamily. Methionine importer (TC 3.A.1.24) family. The complex is composed of two ATP-binding proteins (MetN), two transmembrane proteins (MetI) and a solute-binding protein (MetQ).

The protein localises to the cell inner membrane. It carries out the reaction L-methionine(out) + ATP + H2O = L-methionine(in) + ADP + phosphate + H(+). It catalyses the reaction D-methionine(out) + ATP + H2O = D-methionine(in) + ADP + phosphate + H(+). Its function is as follows. Part of the ABC transporter complex MetNIQ involved in methionine import. Responsible for energy coupling to the transport system. This is Methionine import ATP-binding protein MetN from Bradyrhizobium diazoefficiens (strain JCM 10833 / BCRC 13528 / IAM 13628 / NBRC 14792 / USDA 110).